Reading from the N-terminus, the 86-residue chain is UPF0457 protein SERP1772 (86 aa).

It belongs to the UPF0457 family.

The polypeptide is UPF0457 protein SERP1772 (Staphylococcus epidermidis (strain ATCC 35984 / DSM 28319 / BCRC 17069 / CCUG 31568 / BM 3577 / RP62A)).